A 218-amino-acid polypeptide reads, in one-letter code: Ribulose-phosphate 3-epimerase (218 aa).

Ser10 provides a ligand contact to substrate. Positions 35, 37, and 68 each coordinate a divalent metal cation. Residue Asp37 is the Proton acceptor of the active site. Substrate contacts are provided by residues His68, 144–147 (GFSG), 177–179 (DGG), and 199–200 (GS). Asp177 serves as a coordination point for a divalent metal cation. The active-site Proton donor is Asp177.

It belongs to the ribulose-phosphate 3-epimerase family. A divalent metal cation serves as cofactor.

The catalysed reaction is D-ribulose 5-phosphate = D-xylulose 5-phosphate. It participates in carbohydrate degradation. Its function is as follows. Catalyzes the reversible epimerization of D-ribulose 5-phosphate to D-xylulose 5-phosphate. This Treponema pallidum (strain Nichols) protein is Ribulose-phosphate 3-epimerase.